We begin with the raw amino-acid sequence, 436 residues long: Histone acetyltransferase RTT109 (436 aa).

The Rtt109-type HAT domain occupies 2 to 404; the sequence is SLNDFLSSVL…LQSLTGKREH (403 aa). Acetyl-CoA contacts are provided by residues 88–90 and 97–101; these read ADT and RVSVR. The interaction with VPS75 stretch occupies residues 128–170; the sequence is RSYKKISPELISAASTPARTLRILARRLKQSGSTVLKEIESPR. Residues Phe-192, Ala-196, 211–213, and Trp-221 contribute to the acetyl-CoA site; that span reads HIL. The active-site Proton donor/acceptor is Asp-288. Lys-290 is subject to N6-acetyllysine; by autocatalysis. An interaction with ASF1 region spans residues 419–433; the sequence is LAITMLKPRKKAKAL.

It belongs to the RTT109 family. Forms a complex composed of two RTT109 subunits and one VPS75 homodimer; each RTT109 subunit interacts predominantly with VPS75 instead of interacting with the other RTT109 subunit. Interacts with VPS75; the interaction is direct. Interacts (via C-terminus) with ASF1; the interaction is direct. Interacts with histone H3/H4 heterodimers via histone H3.

The protein localises to the nucleus. The catalysed reaction is L-lysyl-[histone] + acetyl-CoA = N(6)-acetyl-L-lysyl-[histone] + CoA + H(+). It catalyses the reaction L-lysyl-[protein] + acetyl-CoA = N(6)-acetyl-L-lysyl-[protein] + CoA + H(+). Its function is as follows. Histone chaperone-dependent acetylase that modifies 'Lys-9', 'Lys-14', 'Lys-23', 'Lys-27', and 'Lys-56' on histone H3 (H3K9Ac, H3K14Ac and H3K23Ac, H3K27Ac, and H3K56Ac) to promote nucleosome assembly, genomic stability, DNA repair and transcriptional regulation during mitotic S-phase. Its residue selectivity is influenced by the acetylation status of histone H3, and also the presence of histone chaperone ASF1 that shifts selectivity to 'Lys-56' when H3K14Ac is already present. H3K56 acetylation weakens the interaction between the histone core and the surrounding DNA in the nucleosomal particle and drives chromatin disassembly. Autoacetylates. Independently of acetyltransferase activity, stimulates histone deposition by VPS75. Involved in regulation of Ty1 transposition. This Saccharomyces cerevisiae (strain ATCC 204508 / S288c) (Baker's yeast) protein is Histone acetyltransferase RTT109.